Here is a 765-residue protein sequence, read N- to C-terminus: MDPVATHSCHLLQQLHEQRIQGLLCDCMLVVKGVCFKAHKNVLAAFSQYFRSLFQNSSSQKNDVFHLDVKNVSGIGQILDFMYTSHLDLNQDNIQVMLDTAQCLQVQNVLSLCHTFLKSATVVQPPGMPCNSTLSLQSTLTPDATCVISENYPPHLLQECSADAQQNKTLDESHPHASPSVNRHHSAGEISKQAPDTSDGSCTELPFKQPNYYYKLRNFYSKQYHKHAAGPSQERVVEQPFAFSTSTDLTTVESQPCAVSHSECILESPEHLPSNFLAQPVNDSAPHPESDATCQQPVKQMRLKKAIHLKKLNFLKSQKYAEQVSEPKSDDGLTKRLESASKNTLEKASSQSAEEKESEEVVSCENFNCISETERPEDPAALEDQSQTLQSQRQYACELCGKPFKHPSNLELHKRSHTGEKPFECNICGKHFSQAGNLQTHLRRHSGEKPYICEICGKRFAASGDVQRHIIIHSGEKPHLCDICGRGFSNFSNLKEHKKTHTADKVFTCDECGKSFNMQRKLVKHRIRHTGERPYSCSACGKCFGGSGDLRRHVRTHTGEKPYTCEICNKCFTRSAVLRRHKKMHCKAGDESPDVLEELSQAIETSDLEKSQSSDSFSQDTSVTLMPVSVKLPVHPVENSVAEFDSHSGGSYCKLRSMIQPHGVSDQEKLSLDPGKLAKPQMQQTQPQAYAYSDVDTPAGGEPLQADGMAMIRSSLAALDNHGGDPLGSRASSTTYRNSEGQFFSSMTLWGLAMKTLQNENELDQ.

The BTB domain occupies 25–91 (CDCMLVVKGV…MYTSHLDLNQ (67 aa)). 2 disordered regions span residues 165-203 (QQNK…GSCT) and 275-294 (NFLA…DATC). C2H2-type zinc fingers lie at residues 395-417 (YACE…KRSH), 423-445 (FECN…LRRH), 451-473 (YICE…IIIH), 479-501 (HLCD…KKTH), 507-529 (FTCD…RIRH), 535-557 (YSCS…VRTH), and 563-585 (YTCE…KKMH).

This sequence belongs to the krueppel C2H2-type zinc-finger protein family. As to quaternary structure, isoform 1 interacts with EP300 and KAT5/Tip60. The interaction with EP300 is direct and leads to synergistic induction of CDKN1A. On the CDKN1A promoter, forms a complex with ZBTB17/Miz-1; this interaction leads to additive CDKN1A transactivation. Isoform 3 also interacts with ZBTB17; this interaction may block ZBTB17 repressor activity. Highly expressed in normal epidermis and in other epithelial tissues, including in colon and lung. Tends to be down-regulated in colon, lung and skin cancer tissues.

Its subcellular location is the cytoplasm. It is found in the nucleus. Its function is as follows. Transcription factor. Inhibits cell proliferation by activating either CDKN1A/p21 transcription or RB1 transcription. Functionally, binds CDKN1A promoter and activates its transcription; this activity is further potentiated in the presence of EP300 (synergistic) and ZBTB17/Miz-1 (additive). Activates RB1 transcription most probably by antagonizing ZBTB17 repression of RB1. Does not bind directly RB1 promoter. In Homo sapiens (Human), this protein is Zinc finger and BTB domain-containing protein 49 (ZBTB49).